The chain runs to 470 residues: Fumarate reductase 1 (470 aa).

An FAD-binding site is contributed by 6–20 (VVVIGTGLAGLAAAN). Ser-66 is subject to Phosphoserine. Residues His-249 and Arg-272 contribute to the active site.

It belongs to the FAD-dependent oxidoreductase 2 family. FRD/SDH subfamily. The cofactor is FAD. In terms of processing, the N-terminus is blocked.

The protein resides in the cytoplasm. It carries out the reaction succinate + NAD(+) = fumarate + NADH + H(+). Functionally, irreversibly catalyzes the reduction of fumarate to succinate. Together with the second isozyme of soluble fumarate reductase (OSM1), essential for anaerobic growth. Involved in maintaining redox balance. Reduction of fumarate is the main source of succinate during fermentation, and under anaerobic conditions, the formation of succinate is strictly required for the reoxidation of FADH(2). This is Fumarate reductase 1 (FRD1) from Saccharomyces cerevisiae (strain ATCC 204508 / S288c) (Baker's yeast).